Reading from the N-terminus, the 388-residue chain is Beta-hexosaminidase LpqI (388 aa).

An N-terminal signal peptide occupies residues 1-19 (MAFPRTLAILAAAAALVVA). Cys20 carries the N-palmitoyl cysteine lipid modification. Cys20 carries the S-diacylglycerol cysteine lipid modification. Residues Asp123, Arg131, Arg193, and 223 to 224 (KH) contribute to the substrate site. His236 acts as the Proton donor/acceptor in catalysis. Asp311 (nucleophile) is an active-site residue.

This sequence belongs to the glycosyl hydrolase 3 family.

The protein localises to the cell inner membrane. It catalyses the reaction Hydrolysis of terminal non-reducing N-acetyl-D-hexosamine residues in N-acetyl-beta-D-hexosaminides.. Its pathway is cell wall biogenesis; peptidoglycan recycling. Functionally, plays a role in peptidoglycan recycling by cleaving the terminal beta-1,4-linked N-acetylglucosamine (GlcNAc) from peptidoglycan fragments. Acts as a regulator for GlcNAc-MurNAc levels by cleaving disaccharides and allowing the breakdown of MurNAc. This chain is Beta-hexosaminidase LpqI, found in Mycobacterium bovis (strain BCG / Pasteur 1173P2).